The sequence spans 305 residues: Protoheme IX farnesyltransferase 1 (305 aa).

The next 9 helical transmembrane spans lie at 30 to 50 (IGIV…AFQF), 59 to 79 (LDVI…SGAM), 108 to 128 (FVLT…FAAS), 129 to 149 (FAAG…YSMW), 154 to 176 (HVSN…FAAV), 180 to 202 (LGPG…FYAL), 232 to 252 (LFWI…GIGF), 253 to 273 (LTLA…GFTA), and 284 to 304 (FIYS…FAVF).

This sequence belongs to the UbiA prenyltransferase family. Protoheme IX farnesyltransferase subfamily. Interacts with CtaA.

It is found in the cell membrane. The catalysed reaction is heme b + (2E,6E)-farnesyl diphosphate + H2O = Fe(II)-heme o + diphosphate. The protein operates within porphyrin-containing compound metabolism; heme O biosynthesis; heme O from protoheme: step 1/1. Its function is as follows. Converts heme B (protoheme IX) to heme O by substitution of the vinyl group on carbon 2 of heme B porphyrin ring with a hydroxyethyl farnesyl side group. This chain is Protoheme IX farnesyltransferase 1, found in Lysinibacillus sphaericus (strain C3-41).